We begin with the raw amino-acid sequence, 328 residues long: 4-hydroxy-3-methylbut-2-enyl diphosphate reductase (328 aa).

Residue Cys24 participates in [4Fe-4S] cluster binding. The (2E)-4-hydroxy-3-methylbut-2-enyl diphosphate site is built by His55 and His88. Positions 55 and 88 each coordinate dimethylallyl diphosphate. His55 and His88 together coordinate isopentenyl diphosphate. Cys110 contributes to the [4Fe-4S] cluster binding site. Residue His138 coordinates (2E)-4-hydroxy-3-methylbut-2-enyl diphosphate. His138 lines the dimethylallyl diphosphate pocket. Position 138 (His138) interacts with isopentenyl diphosphate. The active-site Proton donor is the Glu140. Thr178 lines the (2E)-4-hydroxy-3-methylbut-2-enyl diphosphate pocket. Cys208 is a [4Fe-4S] cluster binding site. The (2E)-4-hydroxy-3-methylbut-2-enyl diphosphate site is built by Ser236, Ser237, Asn238, and Ser279. 4 residues coordinate dimethylallyl diphosphate: Ser236, Ser237, Asn238, and Ser279. The isopentenyl diphosphate site is built by Ser236, Ser237, Asn238, and Ser279.

This sequence belongs to the IspH family. [4Fe-4S] cluster is required as a cofactor.

It catalyses the reaction isopentenyl diphosphate + 2 oxidized [2Fe-2S]-[ferredoxin] + H2O = (2E)-4-hydroxy-3-methylbut-2-enyl diphosphate + 2 reduced [2Fe-2S]-[ferredoxin] + 2 H(+). The enzyme catalyses dimethylallyl diphosphate + 2 oxidized [2Fe-2S]-[ferredoxin] + H2O = (2E)-4-hydroxy-3-methylbut-2-enyl diphosphate + 2 reduced [2Fe-2S]-[ferredoxin] + 2 H(+). It participates in isoprenoid biosynthesis; dimethylallyl diphosphate biosynthesis; dimethylallyl diphosphate from (2E)-4-hydroxy-3-methylbutenyl diphosphate: step 1/1. Its pathway is isoprenoid biosynthesis; isopentenyl diphosphate biosynthesis via DXP pathway; isopentenyl diphosphate from 1-deoxy-D-xylulose 5-phosphate: step 6/6. Functionally, catalyzes the conversion of 1-hydroxy-2-methyl-2-(E)-butenyl 4-diphosphate (HMBPP) into a mixture of isopentenyl diphosphate (IPP) and dimethylallyl diphosphate (DMAPP). Acts in the terminal step of the DOXP/MEP pathway for isoprenoid precursor biosynthesis. The chain is 4-hydroxy-3-methylbut-2-enyl diphosphate reductase from Ehrlichia ruminantium (strain Gardel).